The chain runs to 453 residues: 3-phosphoshikimate 1-carboxyvinyltransferase (453 aa).

The interval 1–27 is disordered; that stretch reads MSHDSEPQPVTATPGGPLNGSLKPPGD. Residues Lys28, Ser29, and Arg33 each contribute to the 3-phosphoshikimate site. A phosphoenolpyruvate-binding site is contributed by Lys28. Gly101 and Arg129 together coordinate phosphoenolpyruvate. Residues Ser175, Gln177, Asp330, and Lys357 each contribute to the 3-phosphoshikimate site. Phosphoenolpyruvate is bound at residue Gln177. Asp330 serves as the catalytic Proton acceptor. Positions 361 and 405 each coordinate phosphoenolpyruvate.

This sequence belongs to the EPSP synthase family. In terms of assembly, monomer.

It localises to the cytoplasm. It catalyses the reaction 3-phosphoshikimate + phosphoenolpyruvate = 5-O-(1-carboxyvinyl)-3-phosphoshikimate + phosphate. Its pathway is metabolic intermediate biosynthesis; chorismate biosynthesis; chorismate from D-erythrose 4-phosphate and phosphoenolpyruvate: step 6/7. Functionally, catalyzes the transfer of the enolpyruvyl moiety of phosphoenolpyruvate (PEP) to the 5-hydroxyl of shikimate-3-phosphate (S3P) to produce enolpyruvyl shikimate-3-phosphate and inorganic phosphate. The polypeptide is 3-phosphoshikimate 1-carboxyvinyltransferase (Methylorubrum extorquens (strain CM4 / NCIMB 13688) (Methylobacterium extorquens)).